The chain runs to 171 residues: Ribosome maturation factor RimM (171 aa).

A PRC barrel domain is found at 96–168 (EDGFYDHELE…TATITPPEGL (73 aa)).

It belongs to the RimM family. As to quaternary structure, binds ribosomal protein uS19.

The protein resides in the cytoplasm. Functionally, an accessory protein needed during the final step in the assembly of 30S ribosomal subunit, possibly for assembly of the head region. Essential for efficient processing of 16S rRNA. May be needed both before and after RbfA during the maturation of 16S rRNA. It has affinity for free ribosomal 30S subunits but not for 70S ribosomes. This chain is Ribosome maturation factor RimM, found in Corynebacterium glutamicum (strain ATCC 13032 / DSM 20300 / JCM 1318 / BCRC 11384 / CCUG 27702 / LMG 3730 / NBRC 12168 / NCIMB 10025 / NRRL B-2784 / 534).